A 76-amino-acid chain; its full sequence is U14-hexatoxin-Hi1a (76 aa).

An N-terminal signal peptide occupies residues 1–18; it reads MMQLAVLICLSLVVNTFA. 3 disulfides stabilise this stretch: cysteine 21/cysteine 34, cysteine 27/cysteine 39, and cysteine 33/cysteine 61.

As to expression, expressed by the venom gland.

The protein localises to the secreted. Its function is as follows. Probable ion channel inhibitor. In Hadronyche infensa (Fraser island funnel-web spider), this protein is U14-hexatoxin-Hi1a.